The following is a 154-amino-acid chain: 3-hydroxyacyl-[acyl-carrier-protein] dehydratase FabZ (154 aa).

His59 is a catalytic residue.

The protein belongs to the thioester dehydratase family. FabZ subfamily.

It is found in the cytoplasm. It carries out the reaction a (3R)-hydroxyacyl-[ACP] = a (2E)-enoyl-[ACP] + H2O. Functionally, involved in unsaturated fatty acids biosynthesis. Catalyzes the dehydration of short chain beta-hydroxyacyl-ACPs and long chain saturated and unsaturated beta-hydroxyacyl-ACPs. The protein is 3-hydroxyacyl-[acyl-carrier-protein] dehydratase FabZ of Bartonella bacilliformis (strain ATCC 35685 / KC583 / Herrer 020/F12,63).